The sequence spans 94 residues: Pyrimidine/purine nucleoside phosphorylase (94 aa).

The protein belongs to the nucleoside phosphorylase PpnP family.

It catalyses the reaction a purine D-ribonucleoside + phosphate = a purine nucleobase + alpha-D-ribose 1-phosphate. The catalysed reaction is adenosine + phosphate = alpha-D-ribose 1-phosphate + adenine. The enzyme catalyses cytidine + phosphate = cytosine + alpha-D-ribose 1-phosphate. It carries out the reaction guanosine + phosphate = alpha-D-ribose 1-phosphate + guanine. It catalyses the reaction inosine + phosphate = alpha-D-ribose 1-phosphate + hypoxanthine. The catalysed reaction is thymidine + phosphate = 2-deoxy-alpha-D-ribose 1-phosphate + thymine. The enzyme catalyses uridine + phosphate = alpha-D-ribose 1-phosphate + uracil. It carries out the reaction xanthosine + phosphate = alpha-D-ribose 1-phosphate + xanthine. Functionally, catalyzes the phosphorolysis of diverse nucleosides, yielding D-ribose 1-phosphate and the respective free bases. Can use uridine, adenosine, guanosine, cytidine, thymidine, inosine and xanthosine as substrates. Also catalyzes the reverse reactions. In Pectobacterium atrosepticum (strain SCRI 1043 / ATCC BAA-672) (Erwinia carotovora subsp. atroseptica), this protein is Pyrimidine/purine nucleoside phosphorylase.